The primary structure comprises 475 residues: Serralysin G (475 aa).

Positions 1-14 (MALYGKKTDLSSAS) are excised as a propeptide. His186 is a binding site for Zn(2+). Residue Glu187 is part of the active site. The Zn(2+) site is built by His190 and Tyr226. 30 residues coordinate Ca(2+): Arg261, Gly263, Thr265, Asp293, Gly295, Gly296, Asp298, Glu337, Gly342, Gly344, Asp346, Asn351, Asn355, Gly359, Gly360, Ala361, Gly362, Asp364, Gly368, Gly370, Gly371, Asp373, Gly377, Gly378, Ala379, Gly380, Asp382, Asp391, Asp398, and Asp408. Hemolysin-type calcium-binding repeat units follow at residues 340-357 (IGGSGHDVIVGNLSDNRI) and 358-375 (DGGAGNDVLYGDGGADIL).

This sequence belongs to the peptidase M10B family. Requires Ca(2+) as cofactor. Zn(2+) is required as a cofactor.

The protein resides in the secreted. The enzyme catalyses Preferential cleavage of bonds with hydrophobic residues in P1'.. This Dickeya chrysanthemi (Pectobacterium chrysanthemi) protein is Serralysin G (prtG).